Reading from the N-terminus, the 424-residue chain is Serine hydroxymethyltransferase (424 aa).

(6S)-5,6,7,8-tetrahydrofolate is bound by residues L118 and 122 to 124 (GHL). Residue K227 is modified to N6-(pyridoxal phosphate)lysine. 351–353 (SPF) serves as a coordination point for (6S)-5,6,7,8-tetrahydrofolate.

This sequence belongs to the SHMT family. Homodimer. Pyridoxal 5'-phosphate is required as a cofactor.

It is found in the cytoplasm. The catalysed reaction is (6R)-5,10-methylene-5,6,7,8-tetrahydrofolate + glycine + H2O = (6S)-5,6,7,8-tetrahydrofolate + L-serine. The protein operates within one-carbon metabolism; tetrahydrofolate interconversion. Its pathway is amino-acid biosynthesis; glycine biosynthesis; glycine from L-serine: step 1/1. Catalyzes the reversible interconversion of serine and glycine with tetrahydrofolate (THF) serving as the one-carbon carrier. This reaction serves as the major source of one-carbon groups required for the biosynthesis of purines, thymidylate, methionine, and other important biomolecules. Also exhibits THF-independent aldolase activity toward beta-hydroxyamino acids, producing glycine and aldehydes, via a retro-aldol mechanism. In Pseudothermotoga lettingae (strain ATCC BAA-301 / DSM 14385 / NBRC 107922 / TMO) (Thermotoga lettingae), this protein is Serine hydroxymethyltransferase.